The primary structure comprises 256 residues: uncharacterized protein (256 aa).

The disordered stretch occupies residues 211–256 (RKLQASVTTTPPKRCKLADRPAQTTQDTPRAPQPAPVRAQRPLFTL). Residues 246-256 (PVRAQRPLFTL) are compositionally biased toward low complexity.

This is an uncharacterized protein from Orgyia pseudotsugata (Douglas-fir tussock moth).